The following is a 376-amino-acid chain: Glutamate 5-kinase (376 aa).

An ATP-binding site is contributed by Lys15. Ser56, Asp143, and Asn155 together coordinate substrate. Position 175-176 (175-176 (SD)) interacts with ATP. Residues 281-358 (KGTLTIDAGA…PDVMMILGIS (78 aa)) enclose the PUA domain.

The protein belongs to the glutamate 5-kinase family.

It localises to the cytoplasm. The catalysed reaction is L-glutamate + ATP = L-glutamyl 5-phosphate + ADP. Its pathway is amino-acid biosynthesis; L-proline biosynthesis; L-glutamate 5-semialdehyde from L-glutamate: step 1/2. Functionally, catalyzes the transfer of a phosphate group to glutamate to form L-glutamate 5-phosphate. The chain is Glutamate 5-kinase from Rhodopseudomonas palustris (strain BisB5).